A 635-amino-acid polypeptide reads, in one-letter code: Probable extracellular metalloproteinase 1 (635 aa).

A signal peptide spans 1-19 (MHGLLLAAGLLSLPLHVLA). A propeptide spanning residues 20-246 (HPQPSTSTSL…VHNVVDYVAH (227 aa)) is cleaved from the precursor. An N-linked (GlcNAc...) asparagine glycan is attached at Asn287. His430 contributes to the Zn(2+) binding site. The active site involves Glu431. His434 lines the Zn(2+) pocket. N-linked (GlcNAc...) asparagine glycosylation is found at Asn475, Asn594, and Asn623.

It belongs to the peptidase M36 family. The cofactor is Zn(2+).

It localises to the secreted. Secreted metalloproteinase probably acting as a virulence factor. The protein is Probable extracellular metalloproteinase 1 (MEP1) of Arthroderma benhamiae (strain ATCC MYA-4681 / CBS 112371) (Trichophyton mentagrophytes).